The following is a 371-amino-acid chain: Anhydro-N-acetylmuramic acid kinase (371 aa).

Residue 10 to 17 participates in ATP binding; it reads GTSLDGID.

Belongs to the anhydro-N-acetylmuramic acid kinase family.

The enzyme catalyses 1,6-anhydro-N-acetyl-beta-muramate + ATP + H2O = N-acetyl-D-muramate 6-phosphate + ADP + H(+). The protein operates within amino-sugar metabolism; 1,6-anhydro-N-acetylmuramate degradation. It functions in the pathway cell wall biogenesis; peptidoglycan recycling. In terms of biological role, catalyzes the specific phosphorylation of 1,6-anhydro-N-acetylmuramic acid (anhMurNAc) with the simultaneous cleavage of the 1,6-anhydro ring, generating MurNAc-6-P. Is required for the utilization of anhMurNAc either imported from the medium or derived from its own cell wall murein, and thus plays a role in cell wall recycling. This Chromohalobacter salexigens (strain ATCC BAA-138 / DSM 3043 / CIP 106854 / NCIMB 13768 / 1H11) protein is Anhydro-N-acetylmuramic acid kinase.